A 380-amino-acid polypeptide reads, in one-letter code: Epoxyqueuosine reductase (380 aa).

The active-site Proton donor is D134. One can recognise a 4Fe-4S ferredoxin-type 1 domain in the interval 179–208 (PPDQPIEDQCGSCTKCIDICPTGALIQGGQ). Positions 188, 191, 194, 198, 214, 240, 243, and 247 each coordinate [4Fe-4S] cluster. Residues 226–258 (PEEYRDKIGNRIYGCDTCQTVCPKNKGMDFHNH) form the 4Fe-4S ferredoxin-type 2 domain.

Belongs to the QueG family. In terms of assembly, monomer. It depends on cob(II)alamin as a cofactor. [4Fe-4S] cluster serves as cofactor.

It is found in the cytoplasm. It catalyses the reaction epoxyqueuosine(34) in tRNA + AH2 = queuosine(34) in tRNA + A + H2O. The protein operates within tRNA modification; tRNA-queuosine biosynthesis. Functionally, catalyzes the conversion of epoxyqueuosine (oQ) to queuosine (Q), which is a hypermodified base found in the wobble positions of tRNA(Asp), tRNA(Asn), tRNA(His) and tRNA(Tyr). The polypeptide is Epoxyqueuosine reductase (Bacillus anthracis).